The sequence spans 582 residues: ATP-dependent lipid A-core flippase (582 aa).

Transmembrane regions (helical) follow at residues 16-36 (LWPT…ALIL), 64-84 (LLWM…TSYI), 153-173 (IIGL…ILVV), 253-273 (PIIQ…ASFP), and 275-295 (VMDS…IALM). Residues 28–310 (IVAGIALILN…LTNVNAQFQR (283 aa)) enclose the ABC transmembrane type-1 domain. Residues 342–578 (LEFRNVTFTY…HGVYAQLHKM (237 aa)) form the ABC transporter domain. 376–383 (GRSGSGKS) provides a ligand contact to ATP.

Belongs to the ABC transporter superfamily. Lipid exporter (TC 3.A.1.106) family. Homodimer.

Its subcellular location is the cell inner membrane. The enzyme catalyses ATP + H2O + lipid A-core oligosaccharideSide 1 = ADP + phosphate + lipid A-core oligosaccharideSide 2.. Functionally, involved in lipopolysaccharide (LPS) biosynthesis. Translocates lipid A-core from the inner to the outer leaflet of the inner membrane. Transmembrane domains (TMD) form a pore in the inner membrane and the ATP-binding domain (NBD) is responsible for energy generation. The chain is ATP-dependent lipid A-core flippase from Salmonella choleraesuis (strain SC-B67).